The chain runs to 107 residues: MEMKTDAKIRVRLESFNHELLNSSCQKIVNILQNTLSNSIGVITLPTRKRIYCVLRSPHVDKDSREHFEIRTHKRILEIYYNSEVPIFDLLSEADLPPGVFYRICLS.

It belongs to the universal ribosomal protein uS10 family. As to quaternary structure, part of the 30S ribosomal subunit.

It localises to the plastid. The protein localises to the chloroplast. Its function is as follows. Involved in the binding of tRNA to the ribosomes. The protein is Small ribosomal subunit protein uS10c of Phaeodactylum tricornutum (strain CCAP 1055/1).